Consider the following 342-residue polypeptide: Ribosomal RNA small subunit methyltransferase C (342 aa).

This sequence belongs to the methyltransferase superfamily. RsmC family. Monomer.

It localises to the cytoplasm. The catalysed reaction is guanosine(1207) in 16S rRNA + S-adenosyl-L-methionine = N(2)-methylguanosine(1207) in 16S rRNA + S-adenosyl-L-homocysteine + H(+). Specifically methylates the guanine in position 1207 of 16S rRNA in the 30S particle. In Klebsiella pneumoniae subsp. pneumoniae (strain ATCC 700721 / MGH 78578), this protein is Ribosomal RNA small subunit methyltransferase C.